The primary structure comprises 173 residues: Cytochrome c-type biogenesis protein CcmE (173 aa).

The Cytoplasmic segment spans residues 1 to 8; sequence MNPRRKSR. A helical; Signal-anchor for type II membrane protein transmembrane segment spans residues 9–29; it reads FKLVIFVVLGIAIASGLMLYA. The Periplasmic segment spans residues 30 to 173; sequence LRQNIDLFYT…RDRQEKEGAK (144 aa). Heme contacts are provided by His-131 and Tyr-135. The disordered stretch occupies residues 152 to 173; it reads GIEAADLKGESARDRQEKEGAK. Residues 156 to 173 are compositionally biased toward basic and acidic residues; sequence ADLKGESARDRQEKEGAK.

The protein belongs to the CcmE/CycJ family.

The protein resides in the cell inner membrane. Heme chaperone required for the biogenesis of c-type cytochromes. Transiently binds heme delivered by CcmC and transfers the heme to apo-cytochromes in a process facilitated by CcmF and CcmH. The chain is Cytochrome c-type biogenesis protein CcmE from Haemophilus influenzae (strain ATCC 51907 / DSM 11121 / KW20 / Rd).